The following is a 533-amino-acid chain: D-2-hydroxyglutarate dehydrogenase, mitochondrial (533 aa).

The transit peptide at 1–55 directs the protein to the mitochondrion; sequence MGLFQKCSRLSLRSSYMWSVCPQYSIAVTARETPDRALIVHWTQHRDVHNSRRLG. The FAD-binding PCMH-type domain maps to 107–286; the sequence is VQGSSDVLLR…TAVSILCPRK (180 aa). (R)-2-hydroxyglutarate contacts are provided by Arg397, Thr401, and Lys412. (R)-lactate is bound at residue Arg397. The (R)-malate site is built by Arg397, Thr401, and Lys412. Zn(2+) contacts are provided by His445 and His452. A (R)-2-hydroxyglutarate-binding site is contributed by Asn454. Glu486 lines the Zn(2+) pocket. His487 is a (R)-2-hydroxyglutarate binding site. Residue His487 participates in (R)-lactate binding. His487 lines the (R)-malate pocket.

This sequence belongs to the FAD-binding oxidoreductase/transferase type 4 family. FAD is required as a cofactor.

The protein localises to the mitochondrion. The catalysed reaction is (R)-2-hydroxyglutarate + A = 2-oxoglutarate + AH2. The enzyme catalyses (R)-malate + A = oxaloacetate + AH2. Functionally, catalyzes the oxidation of D-2-hydroxyglutarate (D-2-HG) to alpha-ketoglutarate. Also catalyzes the oxidation of other D-2-hydroxyacids, such as D-malate (D-MAL) and D-lactate (D-LAC). Exhibits high activities towards D-2-HG and D-MAL but a very weak activity towards D-LAC. The protein is D-2-hydroxyglutarate dehydrogenase, mitochondrial (d2hgdh) of Danio rerio (Zebrafish).